A 353-amino-acid polypeptide reads, in one-letter code: Photosystem II D2 protein (353 aa).

An N-acetylthreonine modification is found at threonine 2. The residue at position 2 (threonine 2) is a Phosphothreonine. The chain crosses the membrane as a helical span at residues 41 to 61; it reads CAYFAVGGWFTGTTFVTSWYT. Histidine 118 contributes to the chlorophyll a binding site. Residues 125 to 141 form a helical membrane-spanning segment; that stretch reads GFMLRQFELARSVQLRP. Pheophytin a is bound by residues glutamine 130 and asparagine 143. The helical transmembrane segment at 153 to 166 threads the bilayer; it reads VFVSVFLIYPLGQS. Histidine 198 is a chlorophyll a binding site. Residues 208-228 traverse the membrane as a helical segment; sequence AALLCAIHGATVENTLFEDGD. Residues histidine 215 and phenylalanine 262 each contribute to the a plastoquinone site. Histidine 215 contacts Fe cation. A Fe cation-binding site is contributed by histidine 269. The helical transmembrane segment at 279 to 295 threads the bilayer; that stretch reads GLWMSALGVVGLALNLR.

This sequence belongs to the reaction center PufL/M/PsbA/D family. As to quaternary structure, PSII is composed of 1 copy each of membrane proteins PsbA, PsbB, PsbC, PsbD, PsbE, PsbF, PsbH, PsbI, PsbJ, PsbK, PsbL, PsbM, PsbT, PsbX, PsbY, PsbZ, Psb30/Ycf12, at least 3 peripheral proteins of the oxygen-evolving complex and a large number of cofactors. It forms dimeric complexes. It depends on The D1/D2 heterodimer binds P680, chlorophylls that are the primary electron donor of PSII, and subsequent electron acceptors. It shares a non-heme iron and each subunit binds pheophytin, quinone, additional chlorophylls, carotenoids and lipids. There is also a Cl(-1) ion associated with D1 and D2, which is required for oxygen evolution. The PSII complex binds additional chlorophylls, carotenoids and specific lipids. as a cofactor.

The protein localises to the plastid. Its subcellular location is the chloroplast thylakoid membrane. The catalysed reaction is 2 a plastoquinone + 4 hnu + 2 H2O = 2 a plastoquinol + O2. Photosystem II (PSII) is a light-driven water:plastoquinone oxidoreductase that uses light energy to abstract electrons from H(2)O, generating O(2) and a proton gradient subsequently used for ATP formation. It consists of a core antenna complex that captures photons, and an electron transfer chain that converts photonic excitation into a charge separation. The D1/D2 (PsbA/PsbD) reaction center heterodimer binds P680, the primary electron donor of PSII as well as several subsequent electron acceptors. D2 is needed for assembly of a stable PSII complex. The chain is Photosystem II D2 protein from Solanum bulbocastanum (Wild potato).